The chain runs to 1113 residues: Protein KIBRA (1113 aa).

2 consecutive WW domains span residues 6–39 and 53–86; these read LPLP…DPRD and DELP…DPRV. Coiled-coil stretches lie at residues 107–193 and 293–431; these read LSAQ…RGFQ and NSNN…SSMQ. Ser141 carries the post-translational modification Phosphoserine. 2 disordered regions span residues 429–448 and 522–547; these read SMQS…SRGS and RSLS…SPPC. Residues 522–532 are compositionally biased toward polar residues; it reads RSLSGTPKSMT. Positions 533–542 are enriched in low complexity; that stretch reads SLSPRSSLSS. Ser535 carries the phosphoserine modification. Ser542 carries the post-translational modification Phosphoserine; by CDK1. The C2 domain occupies 658–781; sequence GATRIQIALK…RSGERSTRWY (124 aa). The disordered stretch occupies residues 825 to 975; that stretch reads LEKRQEGRSS…RSVRMKRPSS (151 aa). Residues 839 to 1113 are interaction with histone H3; it reads EDSWRYEETS…NIPALSADDV (275 aa). A compositionally biased stretch (acidic residues) spans 847 to 870; that stretch reads TSENEAVAEEEEEEVEEEEGEEDV. The residue at position 899 (Ser899) is a Phosphoserine. Thr912 carries the post-translational modification Phosphothreonine. Residues 924–938 show a composition bias toward polar residues; the sequence is IIRSKTFSPGPQSQY. Phosphoserine is present on Ser927. At Thr929 the chain carries Phosphothreonine. Ser931 is modified (phosphoserine; by CDK1). A Phosphoserine modification is found at Ser947. 2 interaction with PRKCZ regions span residues 953 to 996 and 956 to 975; these read SKKP…LDLQ and PPFV…RPSS. Phosphoserine; by PKC/PRKCZ occurs at positions 975 and 978. Positions 1001–1032 form a coiled coil; it reads WHSQLTQEISVLKELKEQLEQAKSHGEKELPQ. The ADDV motif motif lies at 1111 to 1113; it reads DDV.

This sequence belongs to the WWC family. KIBRA subfamily. In terms of assembly, homodimer. Forms heterodimers with WWC2 and WWC3. Interacts with DDN. Interacts with DYNLL1 and histone H3. The interaction with DYNLL1 is mandatory for the recruitment and transactivation functions of ESR1 or DYNLL1 to the target chromatin and the interaction with histone H3 ensures proper regulatory interaction of WWC1-DYNLL1-ESR1 complexes with target chromatin. Interacts (via WW domains) with DDR1 (via PPxY motif) in a collagen-regulated manner. Interacts with PRKCZ (via the protein kinase domain). Forms a tripartite complex with DDR1 and PRKCZ, but predominantly in the absence of collagen. Interacts (via the ADDV motif) with PATJ (via PDZ domain 8). Interacts (via WW domains) with SYNPO (via PPxY motifs). Interacts with NF2 and SNX4. Interacts with DLC1 and PRKCZ. Interacts (via WW domains) with LATS1 and LATS2. Post-translationally, phosphorylation at Ser-542 and Ser-931 by CDK1 in response to spindle damage stress regulates mitotic exit, these two sites are dephosphorylated by CDC14B. Expressed in mammary epithelial cells and breast cancer cell lines. Found in the luminal epithelium surrounding the ducts in the normal breast. In the brain, expressed in somatodendritic compartment of neurons in the cortex and hippocampus and in the cerebellum it is found in the Purkinje cells and some granule cells (at protein level). Detected in brain, heart, colon and kidney. In the kidney, expressed in glomerular podocytes, in some tubules and in the collecting duct.

Its subcellular location is the cytoplasm. It is found in the perinuclear region. The protein resides in the nucleus. The protein localises to the cell projection. It localises to the ruffle membrane. Its subcellular location is the cytosol. Functionally, regulator of the Hippo signaling pathway, also known as the Salvador-Warts-Hippo (SWH) pathway. Enhances phosphorylation of LATS1 and YAP1 and negatively regulates cell proliferation and organ growth due to a suppression of the transcriptional activity of YAP1, the major effector of the Hippo pathway. Along with NF2 can synergistically induce the phosphorylation of LATS1 and LATS2 and function in the regulation of Hippo signaling pathway. Acts as a transcriptional coactivator of ESR1 which plays an essential role in DYNLL1-mediated ESR1 transactivation. Regulates collagen-stimulated activation of the ERK/MAPK cascade. Modulates directional migration of podocytes. Plays a role in cognition and memory performance. Plays an important role in regulating AMPA-selective glutamate receptors (AMPARs) trafficking underlying synaptic plasticity and learning. In Homo sapiens (Human), this protein is Protein KIBRA.